The following is a 245-amino-acid chain: tRNA1(Val) (adenine(37)-N6)-methyltransferase (245 aa).

The protein belongs to the methyltransferase superfamily. tRNA (adenine-N(6)-)-methyltransferase family.

The protein resides in the cytoplasm. It carries out the reaction adenosine(37) in tRNA1(Val) + S-adenosyl-L-methionine = N(6)-methyladenosine(37) in tRNA1(Val) + S-adenosyl-L-homocysteine + H(+). Specifically methylates the adenine in position 37 of tRNA(1)(Val) (anticodon cmo5UAC). The polypeptide is tRNA1(Val) (adenine(37)-N6)-methyltransferase (Salmonella paratyphi C (strain RKS4594)).